The sequence spans 315 residues: tRNA uridine(34) hydroxylase (315 aa).

The region spanning 145–235 (MKNDFILVDM…GIIEYVNFIK (91 aa)) is the Rhodanese domain. Cys-199 functions as the Cysteine persulfide intermediate in the catalytic mechanism.

It belongs to the TrhO family.

It carries out the reaction uridine(34) in tRNA + AH2 + O2 = 5-hydroxyuridine(34) in tRNA + A + H2O. Catalyzes oxygen-dependent 5-hydroxyuridine (ho5U) modification at position 34 in tRNAs. The polypeptide is tRNA uridine(34) hydroxylase (Wigglesworthia glossinidia brevipalpis).